Reading from the N-terminus, the 225-residue chain is Ribonuclease 3 (225 aa).

In terms of domain architecture, RNase III spans 5-127; the sequence is LDRLQRSLGH…VFAATFLDQG (123 aa). Position 40 (E40) interacts with Mg(2+). D44 is an active-site residue. Mg(2+) is bound by residues D113 and E116. E116 is a catalytic residue. In terms of domain architecture, DRBM spans 154-224; the sequence is DPKTALQELL…AELALAQLRK (71 aa).

It belongs to the ribonuclease III family. In terms of assembly, homodimer. Mg(2+) serves as cofactor.

It is found in the cytoplasm. It carries out the reaction Endonucleolytic cleavage to 5'-phosphomonoester.. Digests double-stranded RNA. Involved in the processing of primary rRNA transcript to yield the immediate precursors to the large and small rRNAs (23S and 16S). Processes some mRNAs, and tRNAs when they are encoded in the rRNA operon. Processes pre-crRNA and tracrRNA of type II CRISPR loci if present in the organism. This chain is Ribonuclease 3, found in Aromatoleum aromaticum (strain DSM 19018 / LMG 30748 / EbN1) (Azoarcus sp. (strain EbN1)).